A 272-amino-acid chain; its full sequence is Shikimate dehydrogenase (NADP(+)) (272 aa).

Shikimate-binding positions include 14-16 (SKS) and threonine 61. Residue lysine 65 is the Proton acceptor of the active site. Shikimate contacts are provided by asparagine 86 and aspartate 102. Residues 126-130 (GAGGA), 149-154 (NRTFSK), serine 189, and methionine 213 each bind NADP(+). Position 215 (tyrosine 215) interacts with shikimate. Glycine 238 lines the NADP(+) pocket.

The protein belongs to the shikimate dehydrogenase family. In terms of assembly, homodimer.

The catalysed reaction is shikimate + NADP(+) = 3-dehydroshikimate + NADPH + H(+). It functions in the pathway metabolic intermediate biosynthesis; chorismate biosynthesis; chorismate from D-erythrose 4-phosphate and phosphoenolpyruvate: step 4/7. In terms of biological role, involved in the biosynthesis of the chorismate, which leads to the biosynthesis of aromatic amino acids. Catalyzes the reversible NADPH linked reduction of 3-dehydroshikimate (DHSA) to yield shikimate (SA). This Haemophilus influenzae (strain ATCC 51907 / DSM 11121 / KW20 / Rd) protein is Shikimate dehydrogenase (NADP(+)).